The following is a 3302-amino-acid chain: MARYQAAVSRGDTRSFSANVMEESDLCTVPGGLAKMKRQFEKDEMTSTCNAFSEYQYQHESRSEQEAIHNRQEIRRNEEEVSKGHRTDVFKAEMMSHLEKHTEETNQASQFRQYVQETVIDTPEDEEIPKVSTKILKEQFEKTAQENFLYSDKETTTPAKCIKIENDSEETLKPSSAMGTSSYTSARQSKETSTSSYSNHSLTSTILAQEKGTPSGKMEEFPPPPPDVFQTPMDVTAFSQSPEFPSPPRRLPMPRDVYSKQRNLYELNRLYRHIHPELRKNLEKDYISEVSEIVSSHINSGNSISAGVQQARYVFENTNDSSQKDLSSERENLEWDEILKGEVQSIRWIFENQPLDSINQGFTDEAYTSKGIADQELIAGGDVKYTTWMFETQPIDALGVPSAGTEENTEKIPELAKGDVCTARWMFETRPLDSMNKMHEWEDETASTFIKDITGGDVKTVRYMFETQQLDQLGQLHSVDEMNLLQLRSELKEIKGNVKRSIKCFETQPLYVIRDGSGQMLEIKTVQREDIEKGDVRTARWMFETQPLDTIKQDITEIKVVRGISMEENVKGEVGRARWLFETQPLEKIKEESGEAVLKTEAVVGIDVSKKCWMFETQPLDTLKQSPDTESVSPEERIGGDVKTTKHLLETLPIEALKDSPDVGKLQKITASEEEKGDVKHQKWVFETQRLEDIREDKKEYTQTVKLEAVDRGHVKNYTHIFESNNLIKVDASHQIEVEGVTRGTVELNKSLFETTPLYAIQDHLGKYHQVKTVQQEEIVRGDVRSCRWLFETRPIDQFDESLHKFQIIRGISAQEIQAGNVKSARWLFETQPLDSIKYFSNVEETDSKTEQSTDIVKGDVKTCKWLFETQPMESLYEKASLMTNSEDIHKGDVRTCMWLFETQPLDAIKNDSEATVKLQTVKQEEIQGGDVRTACLLFETENLDNIQGGEGKETKPVEMDIESGDVSGMKYKFENQSLDSISCSSENVLNKIKTLKIEDIQKGNVLNCRWLFENQPIDMIKENQEGDGLVKTVTDIQGGDVRKGCFIFETFSLDEIKDESDVISTRQTNTEEVIKGDVKSYKMLFETQPLYAIQDQEGFYHEVTTVKKEETIHGDVRGTRWLFETKPLDSINASEDVYIIKSVTQEDIQKGDVSSVRYRFETQPLDMISDKSHNIMPTIDHIQGGNVQMNKQLFESEGGDKKNYVRTVSINEIQKGNVKTSTWLFETHSIDELGEVSTYENIKTVTQEDVQKGDVKQAVWLFENQTLDSIKELDESDTKITKEEIPPSDVKTTTWLFETTPIHEFNETRIEKEEIIGKSIKETLEDLYSQRVVEAPGIIIEADEVGDVRMAKYKLMNQRTPEIQKEEVIRADLGNIMMNLLSQRDCTKKEIFISEEEKGNVNFTKTQLLNRSMEFHAEKEEIVRGDVKQAIQKLFSEERCAKRGILIQEDEKGDVNMTIYCLLHENAGDKTKREDILGGDVRRTIHNLLSSASNDKISERTKIDASERGNVQFFTTCIETGALDYLKQLQTGSNETLTARKQEGEEEIIGGDVEGTKFLLKKRQSSIERTVSETDIIPGDVRNTVKVFMTEPQSASFKTAKEEIVKGDLKSTLNSLNQAMNQKVVAKTEDIMKDDKAAILKSLKESGGRQKEHKQSASISSDIGQAIECLEKATNTRTEILKKELILDDLKTSLRSLKEEQYSFKEVGKQGMVKDVLGFSERQELGIHPAAVQREKKSLLQPVPGPCEPAIRQQAGPGPLDEATQKSCHRSLTEERTEANLPKAPKGTVKIVIDREQNNDALEKSLRKMSNSEHRAMKNVLDMGDRRGVWTESKECLCSDDHMSKYVSASMSRKKSLKTKESENVRESKDDVSSTQSVDKTFRKQQTQNCELGKDHQKSQFQDSYAKNQKNTQNISMSAETQSYRPDPTQHPVSNPAGETLEMTRDFQKQALIRQEKQNSNKDMRKNDMGLQPLPVGKDAHSAPGVTVSGKNHKRTQAPDKKQRIDVCLESQDFLMKTNTSKELKMAMERSFNPVNLYPDCGVKENEDALPPPSPPPPPPSNASSEIEFPLPPPPPIMLLPEKNEFPPSSPTEKSRAELESLPTLPLPPPPGDEKSDQECLPTSLPPPPPTAPSQPAHLLSSSVLEHHSEAFLQQYSRKETLDSHQLHSQAKILTGKSPPPTLPKPKLPERIKAKMSQDSPSGELERSLSDVEIKTTLSKDQKSSLVAESREHTEAKQEVFRKSLGRKQLSISSANSLSQTVPEIPAPKEKQTAPLVKSHSFPSGSEQQSPKPYMRKFKTPLMIAEEKYRQQREELEKQRRESSCHSIIKTETQHRSLSEKEKETELQKAAEAMSTPRKDSDFTRAQPNLEPKSKAVIASECSESQLSTASALTVATERLQHVLAASDDKLTLRREGTQNSSDTLQSKTACEINQSHKECRTEQTFEQHVEKLPFPQTKPISPSFKVKTIRLPALDHTLTETDLSSERRVKQSEIDVQTSTKEMNKEIKKTEVSTQCDNKQSVAEKYFQLPKTEKRVTVQMPKDYAAKSHQSKLQTVPKKHGGLGEFDRGNVLGREGKNQDSSMSSTKESRVIVERKQEHLQDQSVPRLVQQKIIGESLDSRVQNFQQTQTQTSRIEHKELSQPYSEKKCLRDKDKQQKQVSSNTDDSKQEITQKQSSFSSVRESQQDGEKCAINILEFLRKREELQQILSRVKQFEADSNKSGLKTFQTLLNIAPVWLISEEKREYGVRVAMENNLEKVKEEIIHIKTQAEEMLVHCEHVIRTAMMASQTGKQKDKPTNLNEMPLKVSNVNLSSHKGTEQKESKIVEEKLASRQVATHSEAATHNPAKTYQEAKGDDSKMAPPSLKTRPPSPTFITIESTARRAETSTKSELSQSPKNNSCVEPLPRRPMEHTSRLPRTSTSPSPPRSRSEQLVRLKDTTARLAKGTIPCSPGTPVPVVEKRSEVVMSPATLRRQIKIESRGGDSPPTITIPVSVNHHVVSGSFRESVDAQEAVKKTEKTETYVHKDKKNSVSSAMPETESYDAVEIIRKVEGPHLSEHRERFEATNQTVQMAEHFLNGHENEVNRWFREFENGPVFGAKTERRAYANGEINHNMKQESHTFCKEEFGLESSETANFTGFSYRHPREHRAKAPATQPRVHSEARALNEHFLSVDAFDSQIVESQVATSSSRSSEAGRSGFDFKHAPPTYEDVIAGHILDIADSPTNLRRNFQKTWQESERVFKSVGYETSDAHATEMSRAFQEELAFLSETVGPRQGNLHNLSKDGLSNGVPRSRPAEFS.

Residues 166–204 form a disordered region; that stretch reads NDSEETLKPSSAMGTSSYTSARQSKETSTSSYSNHSLTS. The span at 173-187 shows a compositional bias: polar residues; it reads KPSSAMGTSSYTSAR. A compositionally biased stretch (low complexity) spans 191–204; that stretch reads ETSTSSYSNHSLTS. Xin repeat units follow at residues 306–321, 341–356, 381–396, 418–433, 456–471, 496–511, and 534–549; these read AGVQQARYVFENTNDS, GEVQSIRWIFENQPLD, GDVKYTTWMFETQPID, GDVCTARWMFETRPLD, GDVKTVRYMFETQQLD, GNVKRSIKCFETQPLY, and GDVRTARWMFETQPLD. S565 carries the post-translational modification Phosphoserine. 2 Xin repeats span residues 572–587 and 606–621; these read GEVGRARWLFETQPLE and IDVSKKCWMFETQPLD. Position 633 is a phosphoserine (S633). Xin repeat units follow at residues 640–655, 677–692, 713–728, 744–759, and 782–797; these read GDVKTTKHLLETLPIE, GDVKHQKWVFETQRLE, GHVKNYTHIFESNNLI, GTVELNKSLFETTPLY, and GDVRSCRWLFETRPID. S813 carries the phosphoserine modification. Xin repeat units lie at residues 820 to 835, 859 to 874, 892 to 907, 930 to 945, 965 to 980, 1004 to 1019, 1040 to 1055, 1077 to 1092, 1115 to 1130, 1152 to 1167, and 1186 to 1201; these read GNVKSARWLFETQPLD, GDVKTCKWLFETQPME, GDVRTCMWLFETQPLD, GDVRTACLLFETENLD, GDVSGMKYKFENQSLD, GNVLNCRWLFENQPID, GDVRKGCFIFETFSLD, GDVKSYKMLFETQPLY, GDVRGTRWLFETKPLD, GDVSSVRYRFETQPLD, and GNVQMNKQLFESEGGD. S1210 is modified (phosphoserine). 3 Xin repeats span residues 1217-1232, 1254-1269, and 1289-1304; these read GNVKTSTWLFETHSID, GDVKQAVWLFENQTLD, and SDVKTTTWLFETTPIH. S1573 is subject to Phosphoserine. 7 disordered regions span residues 1848 to 1882, 1920 to 1939, 1957 to 2002, 2039 to 2296, 2311 to 2378, 2546 to 2593, and 2626 to 2687; these read VSASMSRKKSLKTKESENVRESKDDVSSTQSVDKT, AETQSYRPDPTQHPVSNPAG, EKQN…APDK, YPDC…KPYM, RQQR…SKAV, YAAK…ESRV, and NFQQ…RESQ. Basic and acidic residues predominate over residues 1859-1873; it reads KTKESENVRESKDDV. T1930 carries the phosphothreonine modification. A Phosphoserine modification is found at S1935. Residues 1957–1969 show a composition bias toward basic and acidic residues; it reads EKQNSNKDMRKND. Composition is skewed to pro residues over residues 2051–2062 and 2125–2134; these read LPPPSPPPPPPS and SLPPPPPTAP. Over residues 2135–2145 the composition is skewed to low complexity; the sequence is SQPAHLLSSSV. S2158 carries the phosphoserine modification. Residues 2158-2167 show a composition bias toward basic and acidic residues; the sequence is SRKETLDSHQ. An interacts with NEBL region spans residues 2181 to 2186; sequence PPTLPK. 3 positions are modified to phosphoserine: S2198, S2211, and S2252. The segment covering 2205–2243 has biased composition (basic and acidic residues); sequence ELERSLSDVEIKTTLSKDQKSSLVAESREHTEAKQEVFR. 2 stretches are compositionally biased toward polar residues: residues 2251–2263 and 2282–2292; these read LSISSANSLSQTV and SFPSGSEQQSP. The stretch at 2303–2328 forms a coiled coil; it reads LMIAEEKYRQQREELEKQRRESSCHS. Basic and acidic residues-rich tracts occupy residues 2311–2325 and 2333–2350; these read RQQREELEKQRRESS and ETQHRSLSEKEKETELQK. The segment covering 2626–2635 has biased composition (polar residues); sequence NFQQTQTQTS. Positions 2636 to 2659 are enriched in basic and acidic residues; sequence RIEHKELSQPYSEKKCLRDKDKQQ. Positions 2674-2685 are enriched in polar residues; it reads TQKQSSFSSVRE. Coiled-coil stretches lie at residues 2696–2724 and 2751–2777; these read NILEFLRKREELQQILSRVKQFEADSNKS and RVAMENNLEKVKEEIIHIKTQAEEMLV. Positions 2835-2934 are disordered; that stretch reads RQVATHSEAA…PSPPRSRSEQ (100 aa). Composition is skewed to polar residues over residues 2836–2850 and 2891–2903; these read QVATHSEAATHNPAK and KSELSQSPKNNSC. A compositionally biased stretch (basic and acidic residues) spans 2907 to 2916; it reads LPRRPMEHTS. Phosphoserine occurs at positions 2987 and 3225. The tract at residues 3278–3302 is disordered; that stretch reads QGNLHNLSKDGLSNGVPRSRPAEFS.

The protein belongs to the Xin family. As to quaternary structure, interacts with ACTN2. Interacts with F-actin. Interacts with NEBL (via SH3 domain). Interacts with Kcna5/Kv1.5 and Scn5a/Nav1.5; the interactions are required for normal action potential configuration in the heart.

The protein localises to the cell junction. Protects actin filaments from depolymerization. Required for correct morphology of cell membranes and maturation of intercalated disks of cardiomyocytes via facilitating localization of XIRP1 and CDH2 to the termini of aligned mature cardiomyocytes. Thereby required for correct postnatal heart development and growth regulation that is crucial for overall heart morphology and diastolic function. Required for normal electrical conduction in the heart including formation of the infranodal ventricular conduction system and normal action potential configuration, as a result of its interaction with the cardiac ion channel components Scn5a/Nav1.5 and Kcna5/Kv1.5. Required for regular actin filament spacing of the paracrystalline array in both inner and outer hair cells of the cochlea, thereby required for maintenance of stereocilia morphology. The polypeptide is Xin actin-binding repeat-containing protein 2 (Rattus norvegicus (Rat)).